Consider the following 350-residue polypeptide: Cytochrome c biogenesis protein CcsA (350 aa).

8 consecutive transmembrane segments (helical) span residues 23–43, 47–67, 82–102, 108–128, 153–173, 258–278, 293–313, and 319–339; these read NVAF…AAFP, LLAE…AALL, LYES…LALH, WVGV…ALVL, VMLL…SFLI, LIGL…VWAN, WALI…TKGW, and ALLA…VNFL.

Belongs to the CcmF/CycK/Ccl1/NrfE/CcsA family. In terms of assembly, may interact with ccs1.

Its subcellular location is the cellular thylakoid membrane. Its function is as follows. Required during biogenesis of c-type cytochromes (cytochrome c6 and cytochrome f) at the step of heme attachment. This chain is Cytochrome c biogenesis protein CcsA, found in Synechococcus sp. (strain JA-2-3B'a(2-13)) (Cyanobacteria bacterium Yellowstone B-Prime).